A 246-amino-acid chain; its full sequence is 7-cyano-7-deazaguanine synthase (246 aa).

24–34 (FSGGLDSTTVL) is an ATP binding site. The Zn(2+) site is built by C209, C219, C222, and C225.

This sequence belongs to the QueC family. Zn(2+) is required as a cofactor.

It carries out the reaction 7-carboxy-7-deazaguanine + NH4(+) + ATP = 7-cyano-7-deazaguanine + ADP + phosphate + H2O + H(+). The protein operates within purine metabolism; 7-cyano-7-deazaguanine biosynthesis. Catalyzes the ATP-dependent conversion of 7-carboxy-7-deazaguanine (CDG) to 7-cyano-7-deazaguanine (preQ(0)). This chain is 7-cyano-7-deazaguanine synthase, found in Polynucleobacter asymbioticus (strain DSM 18221 / CIP 109841 / QLW-P1DMWA-1) (Polynucleobacter necessarius subsp. asymbioticus).